The primary structure comprises 335 residues: DNA-directed RNA polymerase subunit alpha (335 aa).

The tract at residues 1–231 is alpha N-terminal domain (alpha-NTD); sequence MVREKVTVST…DLFIPFLHME (231 aa). Residues 262–335 are alpha C-terminal domain (alpha-CTD); sequence KKKLSLESIF…FALDLPKNLN (74 aa).

The protein belongs to the RNA polymerase alpha chain family. In terms of assembly, in plastids the minimal PEP RNA polymerase catalytic core is composed of four subunits: alpha, beta, beta', and beta''. When a (nuclear-encoded) sigma factor is associated with the core the holoenzyme is formed, which can initiate transcription.

It localises to the plastid. It carries out the reaction RNA(n) + a ribonucleoside 5'-triphosphate = RNA(n+1) + diphosphate. In terms of biological role, DNA-dependent RNA polymerase catalyzes the transcription of DNA into RNA using the four ribonucleoside triphosphates as substrates. The sequence is that of DNA-directed RNA polymerase subunit alpha from Cuscuta reflexa (Southern Asian dodder).